The sequence spans 78 residues: NEDD8-like protein RUB3 (78 aa).

A Glycyl lysine isopeptide (Gly-Lys) (interchain with K-? in acceptor proteins) cross-link involves residue glycine 76. Residues 77–78 constitute a propeptide that is removed on maturation; it reads CC.

In terms of tissue distribution, detected in stems and flower buds, but not in leaves, mature flowers and seedlings.

Its function is as follows. May function as a stable post-translational protein modifier. This chain is NEDD8-like protein RUB3 (RUB3), found in Arabidopsis thaliana (Mouse-ear cress).